Here is a 779-residue protein sequence, read N- to C-terminus: Acyl-CoA dehydrogenase family member 11 (779 aa).

3 positions are modified to N6-acetyllysine: Lys-163, Lys-166, and Lys-175. Ser-210 is subject to Phosphoserine. The residue at position 323 (Tyr-323) is a Phosphotyrosine. 2 positions are modified to N6-succinyllysine: Lys-368 and Lys-390. FAD-binding positions include 503 to 513, 511 to 513, 537 to 539, and Ser-539; these read FCMTEPNVSSS, SSS, and WSS. Position 513 (Ser-513) interacts with substrate. 628–631 is a binding site for substrate; it reads GPGR. FAD is bound by residues Arg-656, Gln-726, and 726-730; that span reads QVHGG. Position 754 (Gly-754) interacts with substrate. FAD-binding positions include 755 to 757 and Glu-757; that span reads PDE. Lys-765 is subject to N6-acetyllysine.

The protein belongs to the acyl-CoA dehydrogenase family. Homodimer. FAD is required as a cofactor.

The protein resides in the peroxisome. The protein localises to the mitochondrion membrane. The enzyme catalyses a 2,3-saturated acyl-CoA + oxidized [electron-transfer flavoprotein] + H(+) = a (2E)-enoyl-CoA + reduced [electron-transfer flavoprotein]. It catalyses the reaction docosanoyl-CoA + oxidized [electron-transfer flavoprotein] + H(+) = (2E)-docosenoyl-CoA + reduced [electron-transfer flavoprotein]. The catalysed reaction is tetracosanoyl-CoA + oxidized [electron-transfer flavoprotein] + H(+) = (2E)-tetracosenoyl-CoA + reduced [electron-transfer flavoprotein]. It carries out the reaction eicosanoyl-CoA + oxidized [electron-transfer flavoprotein] + H(+) = (2E)-eicosenoyl-CoA + reduced [electron-transfer flavoprotein]. The enzyme catalyses hexacosanoyl-CoA + oxidized [electron-transfer flavoprotein] + H(+) = (2E)-hexacosenoyl-CoA + reduced [electron-transfer flavoprotein]. It catalyses the reaction tricosanoyl-CoA + oxidized [electron-transfer flavoprotein] + H(+) = (2E)-tricosenoyl-CoA + reduced [electron-transfer flavoprotein]. The protein operates within lipid metabolism; fatty acid beta-oxidation. Functionally, acyl-CoA dehydrogenase, that exhibits maximal activity towards saturated C22-CoA. Probably participates in beta-oxydation and energy production but could also play a role in the metabolism of specific fatty acids to control fatty acids composition of cellular lipids in brain. The sequence is that of Acyl-CoA dehydrogenase family member 11 (Acad11) from Mus musculus (Mouse).